A 228-amino-acid chain; its full sequence is Secreted LysM effector ECP6 (228 aa).

The first 18 residues, 1–18, serve as a signal peptide directing secretion; sequence MQSMILFAAALMGAAVNG. Intrachain disulfides connect Cys-36–Cys-90, Cys-64–Cys-98, Cys-109–Cys-163, and Cys-168–Cys-220. The LysM 1 domain occupies 42–86; that stretch reads IKYTVVKGDTLTSIAKKFKSGICNIVSVNKLANPNLIELGATLII. Positions 51, 53, 76, and 78 each coordinate chitin. 4 N-linked (GlcNAc...) asparagine glycosylation sites follow: Asn-89, Asn-95, Asn-127, and Asn-133. LysM domains lie at 115–160 and 172–216; these read GSYT…IITV and GTYN…QIIL. Chitin is bound by residues Gly-179, Leu-181, Val-183, Pro-205, Ser-206, and Leu-208. A glycan (N-linked (GlcNAc...) asparagine) is linked at Asn-222.

Belongs to the secreted LysM effector family. Forms homodimers.

The protein resides in the secreted. Its function is as follows. Secreted effector that enables the plant pathogenic fungus to manipulate host defenses for successful infection. Binds chitine, but not to any other glycan, including the N-linked glycan chitobiose. Outcompetes host immune receptor for chitin binding through intrachain LysM dimerization. During infection, sequesters chitin oligosaccharides that are released from the cell walls of invading hyphae to prevent elicitation of host immunity. The chain is Secreted LysM effector ECP6 from Passalora fulva (Tomato leaf mold).